The sequence spans 942 residues: Mitogen-activated protein kinase kinase kinase A (942 aa).

Positions 15–96 constitute a PB1 domain; it reads FIRIKCILGD…NPTKIISTKF (82 aa). The segment at 107-144 is disordered; sequence PLSSSLSPTQSLILNNNNNNNNNNNNNNNNNNNNNNNN. Residues 170 to 429 enclose the Protein kinase domain; the sequence is WQKGQILGRG…ANQLLKHPFI (260 aa). ATP is bound by residues 176–184 and lysine 199; that span reads LGRGGYGSV. Aspartate 297 serves as the catalytic Proton acceptor. The segment covering 441-486 has biased composition (low complexity); that stretch reads ISPTTTLSTNTTNTTATTTTTNNATNSNINQQQQQQQQQPPTRTQR. The disordered stretch occupies residues 441-512; sequence ISPTTTLSTN…ISTSTSSSSS (72 aa). Positions 487–498 are enriched in polar residues; sequence VSISAGSSNNKR. Positions 500–512 are enriched in low complexity; sequence TPPISTSTSSSSS. A helical membrane pass occupies residues 513 to 533; it reads SILNNFSINIILPINLIILIF. Residues 518–564 form the F-box domain; sequence FSINIILPINLIILIFREIKPNFVNTLSRVCKHWKQIIDDDELWNKY. WD repeat units follow at residues 607 to 646, 690 to 733, 736 to 778, 780 to 825, 828 to 865, 872 to 909, and 912 to 942; these read GHDK…HHNH, GHSG…TLFT, NHQE…STLR, HTGG…KVRS, QHTE…TIST, RQKN…DSRS, and GHHE…WSID.

Belongs to the protein kinase superfamily. STE Ser/Thr protein kinase family. MAP kinase kinase kinase subfamily. As to quaternary structure, interacts with ubcB and ubpB. Mg(2+) is required as a cofactor. In terms of processing, ubcB and ubpB differentially control ubiquitination/deubiquitination and degradation in a cell-type-specific and temporally regulated manner.

It localises to the membrane. The catalysed reaction is L-seryl-[protein] + ATP = O-phospho-L-seryl-[protein] + ADP + H(+). It catalyses the reaction L-threonyl-[protein] + ATP = O-phospho-L-threonyl-[protein] + ADP + H(+). Regulates cell-type differentiation and spatial patterning, required for the proper induction and maintenance of prespore cell differentiation. This is Mitogen-activated protein kinase kinase kinase A from Dictyostelium discoideum (Social amoeba).